Reading from the N-terminus, the 137-residue chain is Large-conductance mechanosensitive channel (137 aa).

The next 2 helical transmembrane spans lie at 10–30 and 76–96; these read FAMR…AAFG and GTFI…FSAV.

This sequence belongs to the MscL family. As to quaternary structure, homopentamer.

The protein resides in the cell inner membrane. Functionally, channel that opens in response to stretch forces in the membrane lipid bilayer. May participate in the regulation of osmotic pressure changes within the cell. The protein is Large-conductance mechanosensitive channel of Yersinia pseudotuberculosis serotype O:1b (strain IP 31758).